A 361-amino-acid chain; its full sequence is 3-dehydroquinate synthase (361 aa).

Residues 73 to 78 (DAEAGK), 107 to 111 (GAATD), 131 to 132 (TT), K144, K153, and 171 to 174 (TLET) contribute to the NAD(+) site. Zn(2+)-binding residues include E186, H249, and H265.

Belongs to the sugar phosphate cyclases superfamily. Dehydroquinate synthase family. Requires NAD(+) as cofactor. Co(2+) serves as cofactor. Zn(2+) is required as a cofactor.

It localises to the cytoplasm. It catalyses the reaction 7-phospho-2-dehydro-3-deoxy-D-arabino-heptonate = 3-dehydroquinate + phosphate. It participates in metabolic intermediate biosynthesis; chorismate biosynthesis; chorismate from D-erythrose 4-phosphate and phosphoenolpyruvate: step 2/7. Its function is as follows. Catalyzes the conversion of 3-deoxy-D-arabino-heptulosonate 7-phosphate (DAHP) to dehydroquinate (DHQ). The sequence is that of 3-dehydroquinate synthase from Mycobacterium leprae (strain TN).